Here is a 414-residue protein sequence, read N- to C-terminus: 5-aminolevulinate synthase (414 aa).

Positions 22, 133, and 152 each coordinate substrate. Pyridoxal 5'-phosphate-binding residues include serine 185, histidine 213, and threonine 241. Lysine 244 is an active-site residue. At lysine 244 the chain carries N6-(pyridoxal phosphate)lysine. Residues threonine 273 and threonine 274 each contribute to the pyridoxal 5'-phosphate site. Threonine 359 lines the substrate pocket.

The protein belongs to the class-II pyridoxal-phosphate-dependent aminotransferase family. As to quaternary structure, homodimer. Pyridoxal 5'-phosphate serves as cofactor.

It catalyses the reaction succinyl-CoA + glycine + H(+) = 5-aminolevulinate + CO2 + CoA. The protein operates within porphyrin-containing compound metabolism; protoporphyrin-IX biosynthesis; 5-aminolevulinate from glycine: step 1/1. The polypeptide is 5-aminolevulinate synthase (hemA) (Rickettsia typhi (strain ATCC VR-144 / Wilmington)).